A 501-amino-acid chain; its full sequence is MALGALLLLLGVLGTPLAPGARGSEAEGQLIKKLFSNYDSSVRPAREVGDRVGVSIGLTLAQLISLNEKDEEMSTKVYLDLEWTDYRLSWDPAEHDGIDSLRITAESVWLPDVVLLNNNDGNFDVALDINVVVSFEGSVRWQPPGLYRSSCSIQVTYFPFDWQNCTMVFSSYSYDSSEVSLKTGLDPEGEERQEVYIHEGTFIENGQWEIIHKPSRLIQLPGDQRGGKEGHHEEVIFYLIIRRKPLFYLVNVIAPCILITLLAIFVFYLPPDAGEKMGLSIFALLTLTVFLLLLADKVPETSLAVPIIIKYLMFTMVLVTFSVILSVVVLNLHHRSPHTHQMPFWVRQIFIHKLPPYLGLKRPKPERDQLPEPHHSLSPRSGWGRGTDEYFIRKPPSDFLFPKLNRFQPESSAPDLRRFIDGPTRAVGLPQELREVISSISYMARQLQEQEDHDALKEDWQFVAMVVDRLFLWTFIVFTSVGTLVIFLDATYHLPPPEPFP.

The first 23 residues, 1-23, serve as a signal peptide directing secretion; that stretch reads MALGALLLLLGVLGTPLAPGARG. Topologically, residues 24–244 are extracellular; sequence SEAEGQLIKK…VIFYLIIRRK (221 aa). An intrachain disulfide couples cysteine 151 to cysteine 165. The N-linked (GlcNAc...) asparagine glycan is linked to asparagine 164. The next 3 helical transmembrane spans lie at 245–269, 277–295, and 311–332; these read PLFY…VFYL, MGLS…LLLA, and YLMF…VLNL. The Cytoplasmic segment spans residues 333–469; it reads HHRSPHTHQM…WQFVAMVVDR (137 aa). A disordered region spans residues 362–382; that stretch reads RPKPERDQLPEPHHSLSPRSG. A compositionally biased stretch (basic and acidic residues) spans 363–375; sequence PKPERDQLPEPHH. Tyrosine 390 bears the Phosphotyrosine; by Tyr-kinases mark. A helical transmembrane segment spans residues 470-488; it reads LFLWTFIVFTSVGTLVIFL.

The protein belongs to the ligand-gated ion channel (TC 1.A.9) family. Acetylcholine receptor (TC 1.A.9.1) subfamily. Beta-1/CHRNB1 sub-subfamily. As to quaternary structure, pentamer of two alpha chains, and one each of the beta, delta, and gamma (in immature muscle) or epsilon (in mature muscle) chains. The muscle heteropentamer composed of alpha-1, beta-1, delta, epsilon subunits interacts with the alpha-conotoxin ImII.

It localises to the postsynaptic cell membrane. The protein resides in the cell membrane. It catalyses the reaction K(+)(in) = K(+)(out). The catalysed reaction is Na(+)(in) = Na(+)(out). Its function is as follows. After binding acetylcholine, the AChR responds by an extensive change in conformation that affects all subunits and leads to opening of an ion-conducting channel across the plasma membrane. This Mus musculus (Mouse) protein is Acetylcholine receptor subunit beta (Chrnb1).